The sequence spans 556 residues: Energy-dependent translational throttle protein EttA (556 aa).

2 ABC transporter domains span residues 7–260 (YTMH…EQEQ) and 325–551 (IEVQ…RIKY). 40–47 (GLNGAGKS) is an ATP binding site. The interval 96-140 (SEVKNALTRLDEVYALYADPDADFDKLAAEQANLEAIIQAHDGHN) is arm. The segment at 243–323 (GNYSSWLEQK…IPPGPRLGDK (81 aa)) is ptIM. 357 to 364 (GANGAGKS) is an ATP binding site.

Belongs to the ABC transporter superfamily. ABCF family. Translational throttle EttA subfamily. In terms of assembly, monomer. Probably contacts ribosomal proteins L1, L5, L33 and S7, the 16S and 23S rRNA and the P-site containing tRNA(fMet).

The protein resides in the cytoplasm. It catalyses the reaction ATP + H2O = ADP + phosphate + H(+). In terms of biological role, a translation factor that gates the progression of the 70S ribosomal initiation complex (IC, containing tRNA(fMet) in the P-site) into the translation elongation cycle by using a mechanism sensitive to the ATP/ADP ratio. Binds to the 70S ribosome E-site where it modulates the state of the translating ribosome during subunit translocation. ATP hydrolysis probably frees it from the ribosome, which can enter the elongation phase. The sequence is that of Energy-dependent translational throttle protein EttA from Haemophilus influenzae (strain ATCC 51907 / DSM 11121 / KW20 / Rd).